A 215-amino-acid polypeptide reads, in one-letter code: 3-dehydroquinate dehydratase (215 aa).

3-dehydroquinate-binding positions include 30–32 and Arg62; that span reads EVR. His114 (proton donor/acceptor) is an active-site residue. The active-site Schiff-base intermediate with substrate is Lys140. Arg178 and Gln201 together coordinate 3-dehydroquinate.

Belongs to the type-I 3-dehydroquinase family. Homodimer.

It carries out the reaction 3-dehydroquinate = 3-dehydroshikimate + H2O. Its pathway is metabolic intermediate biosynthesis; chorismate biosynthesis; chorismate from D-erythrose 4-phosphate and phosphoenolpyruvate: step 3/7. Its function is as follows. Involved in the third step of the chorismate pathway, which leads to the biosynthesis of aromatic amino acids. Catalyzes the cis-dehydration of 3-dehydroquinate (DHQ) and introduces the first double bond of the aromatic ring to yield 3-dehydroshikimate. In Methanopyrus kandleri (strain AV19 / DSM 6324 / JCM 9639 / NBRC 100938), this protein is 3-dehydroquinate dehydratase.